Here is a 146-residue protein sequence, read N- to C-terminus: Large ribosomal subunit protein bL9 (146 aa).

This sequence belongs to the bacterial ribosomal protein bL9 family.

Binds to the 23S rRNA. This Symbiobacterium thermophilum (strain DSM 24528 / JCM 14929 / IAM 14863 / T) protein is Large ribosomal subunit protein bL9.